The sequence spans 453 residues: Gamma-aminobutyric acid receptor subunit alpha-6 (453 aa).

The signal sequence occupies residues 1-19; the sequence is MLLLLPWLFSLLWIENAQA. Over 20–243 the chain is Extracellular; that stretch reads QLEDEGNFYS…FHLQRKMGYF (224 aa). The N-linked (GlcNAc...) asparagine glycan is linked to Asn-31. Arg-84 serves as a coordination point for 4-aminobutanoate. N-linked (GlcNAc...) asparagine glycosylation is found at Asn-128 and Asn-141. Residue Thr-147 participates in 4-aminobutanoate binding. Cys-156 and Cys-170 are joined by a disulfide. Residues 244-264 traverse the membrane as a helical segment; sequence MIQIYTPCIMTVILSQVSFWI. Residues 265–270 lie on the Cytoplasmic side of the membrane; that stretch reads NKESVP. A helical transmembrane segment spans residues 271 to 290; it reads ARTVFGITTVLTMTTLSISA. Residues 291–304 lie on the Extracellular side of the membrane; it reads RHSLPKVSYATAMD. The helical transmembrane segment at 305–325 threads the bilayer; it reads WFIAVCFAFVFSALIEFAAVN. The Cytoplasmic portion of the chain corresponds to 326 to 422; sequence YFTNLQSQKA…GTSKIDQYSR (97 aa). Ser-375 is subject to Phosphoserine. Thr-403 is subject to Phosphothreonine. The helical transmembrane segment at 423–443 threads the bilayer; sequence ILFPVAFAGFNLVYWIVYLSK. Topologically, residues 444–453 are extracellular; that stretch reads DTMEVSSTVE.

This sequence belongs to the ligand-gated ion channel (TC 1.A.9) family. Gamma-aminobutyric acid receptor (TC 1.A.9.5) subfamily. GABRA6 sub-subfamily. In terms of assembly, heteropentamer, formed by a combination of alpha (GABRA1-6), beta (GABRB1-3), gamma (GABRG1-3), delta (GABRD), epsilon (GABRE), rho (GABRR1-3), pi (GABRP) and theta (GABRQ) chains, each subunit exhibiting distinct physiological and pharmacological properties. Binds UBQLN1. In terms of tissue distribution, expressed in brain, in cerebellar granule cells.

It is found in the postsynaptic cell membrane. The protein localises to the cell membrane. It catalyses the reaction chloride(in) = chloride(out). Alpha subunit of the heteropentameric ligand-gated chloride channel gated by gamma-aminobutyric acid (GABA), a major inhibitory neurotransmitter in the brain. GABA-gated chloride channels, also named GABA(A) receptors (GABAAR), consist of five subunits arranged around a central pore and contain GABA active binding site(s) located at the alpha and beta subunit interface(s). When activated by GABA, GABAARs selectively allow the flow of chloride anions across the cell membrane down their electrochemical gradient. Alpha-6/GABRA6 subunits are found at both synaptic and extrasynaptic sites. Chloride influx into the postsynaptic neuron following GABAAR opening decreases the neuron ability to generate a new action potential, thereby reducing nerve transmission. Extrasynaptic alpha-6-containing receptors contribute to the tonic GABAergic inhibition. Alpha-6 subunits are also present on glutamatergic synapses. This chain is Gamma-aminobutyric acid receptor subunit alpha-6, found in Rattus norvegicus (Rat).